A 134-amino-acid polypeptide reads, in one-letter code: UPF0357 protein AAL017W (134 aa).

Residues 1–23 (MFGLISLWHLFWLAVMAGILVVA) form the signal peptide.

It belongs to the UPF0357 family.

The sequence is that of UPF0357 protein AAL017W from Eremothecium gossypii (strain ATCC 10895 / CBS 109.51 / FGSC 9923 / NRRL Y-1056) (Yeast).